We begin with the raw amino-acid sequence, 398 residues long: Carbamoyl phosphate synthase large chain (398 aa).

The ATP-grasp domain maps to 1 to 187; it reads KLGVPQPEGG…LAKIAAKVIV (187 aa). The tract at residues 1–255 is carbamoyl phosphate synthetic domain; that stretch reads KLGVPQPEGG…YKAELAADNV (255 aa). ATP contacts are provided by Arg32, Asp71, Leu73, Glu78, Gly103, Val104, His105, Ser106, Gln146, and Glu158. Mg(2+) contacts are provided by Gln146, Glu158, and Asn160. Positions 146, 158, and 160 each coordinate Mn(2+). In terms of domain architecture, MGS-like spans 254–395; that stretch reads NVLPLTGKVF…NEYHKEMEEE (142 aa). Residues 256–398 are allosteric domain; the sequence is LPLTGKVFLS…HKEMEEENKV (143 aa).

Belongs to the CarB family. Composed of two chains; the small (or glutamine) chain promotes the hydrolysis of glutamine to ammonia, which is used by the large (or ammonia) chain to synthesize carbamoyl phosphate. Tetramer of heterodimers (alpha,beta)4. Mg(2+) serves as cofactor. Mn(2+) is required as a cofactor.

It catalyses the reaction hydrogencarbonate + L-glutamine + 2 ATP + H2O = carbamoyl phosphate + L-glutamate + 2 ADP + phosphate + 2 H(+). It carries out the reaction hydrogencarbonate + NH4(+) + 2 ATP = carbamoyl phosphate + 2 ADP + phosphate + 2 H(+). It participates in amino-acid biosynthesis; L-arginine biosynthesis; carbamoyl phosphate from bicarbonate: step 1/1. It functions in the pathway pyrimidine metabolism; UMP biosynthesis via de novo pathway; (S)-dihydroorotate from bicarbonate: step 1/3. Large subunit of the glutamine-dependent carbamoyl phosphate synthetase (CPSase). CPSase catalyzes the formation of carbamoyl phosphate from the ammonia moiety of glutamine, carbonate, and phosphate donated by ATP, constituting the first step of 2 biosynthetic pathways, one leading to arginine and/or urea and the other to pyrimidine nucleotides. The large subunit (synthetase) binds the substrates ammonia (free or transferred from glutamine from the small subunit), hydrogencarbonate and ATP and carries out an ATP-coupled ligase reaction, activating hydrogencarbonate by forming carboxy phosphate which reacts with ammonia to form carbamoyl phosphate. This is Carbamoyl phosphate synthase large chain from Methanosarcina barkeri.